The chain runs to 121 residues: Flagellar protein FliT (121 aa).

The tract at residues 1–50 is required for homodimerization; the sequence is MNHAPHLYFAWQQLVEKSQLMLRLATEEQWDELIASEMAYVNAVQEIAHL. Residues 60-98 are fliD binding; the sequence is MQEQLRPMLRLILDNESKVKQLLQIRMDELAKLVGQSSV.

It belongs to the FliT family. As to quaternary structure, homodimer. Interacts with FliD and FlhC.

It localises to the cytoplasm. It is found in the cytosol. In terms of biological role, dual-function protein that regulates the transcription of class 2 flagellar operons and that also acts as an export chaperone for the filament-capping protein FliD. As a transcriptional regulator, acts as an anti-FlhDC factor; it directly binds FlhC, thus inhibiting the binding of the FlhC/FlhD complex to class 2 promoters, resulting in decreased expression of class 2 flagellar operons. As a chaperone, effects FliD transition to the membrane by preventing its premature polymerization, and by directing it to the export apparatus. The protein is Flagellar protein FliT of Escherichia coli O8 (strain IAI1).